The primary structure comprises 614 residues: MIKKASLLTACSVTAFSAWAQDTSPDTLVVTANRFEQPRSTVLAPTTVVTRQDIDRWQSTSVNDVLRRLPGVDITQNGGSGQLSSIFIRGTNASHVLVLIDGVRLNLAGVSGSADLSQFPIALVQRVEYIRGPRSAVYGSDAIGGVVNIITTRDEPGTEISAGWGSNSYQNYDVSTQQQLGDKTRVTLLGDYAHTHGYDVVAYGNTGTQAQTDNDGFLSKTLYGALEHNFTDAWSGFVRGYGYDNRTNYDAYYSPGSPLLDTRKLYSQSWDAGLRYNGELIKSQLITSYSHSKDYNYDPHFGRYDSSATLDEMKQYTVQWANNVIVGHGSIGAGVDWQKQTTTPGTGYVENGYDQRNTGIYLTGLQQVGDFTFEGAARSDDNSQFGRHGTWQTSAGWEFIEGYRFIASYGTSYKAPNLGQLYGFYGNPNLDPEKSKQWEGAFEGLTAGVNWRISGYRNDVSDLIDYDDHTLKYYNEGKARIKGVEATANFDTGPLTHTVSYDYVDARNAITDTPLLRRAKQQVKYQLDWQLYDFDWGITYQYLGTRYDKDYSSYPYQTVKMGGVSLWDLAVAYPVTSHLTVRGKIANLFDKDYETVYGYQTAGREYTLSGSYTF.

The signal sequence occupies residues 1–20 (MIKKASLLTACSVTAFSAWA). The short motif at 26–33 (DTLVVTAN) is the TonB box element. The region spanning 38–152 (PRSTVLAPTT…IGGVVNIITT (115 aa)) is the TBDR plug domain. Residues Leu83, Ser85, Asn92, and 110–111 (VS) contribute to the cyanocob(III)alamin site. The TBDR beta-barrel domain maps to 155–614 (EPGTEISAGW…EYTLSGSYTF (460 aa)). 3 beta stranded membrane passes run 158-165 (TEISAGWG), 169-178 (YQNYDVSTQQ), and 184-195 (TRVTLLGDYAHT). Positions 199, 211, 213, and 215 each coordinate Ca(2+). Beta stranded transmembrane passes span 217–227 (FLSKTLYGALE) and 232–248 (DAWSGFVRGYGYDNRTN). Residues Tyr249 and Asp250 each contribute to the Ca(2+) site. Ala251 is a binding site for cyanocob(III)alamin. Residue Asp261 coordinates Ca(2+). The next 14 beta stranded transmembrane spans lie at 263-277 (RKLYSQSWDAGLRYN), 279-296 (ELIKSQLITSYSHSKDYN), 309-325 (TLDEMKQYTVQWANNVI), 328-337 (HGSIGAGVDW), 353-369 (YDQRNTGIYLTGLQQVG), 371-381 (FTFEGAARSDD), 385-400 (FGRHGTWQTSAGWEFI), 403-417 (YRFIASYGTSYKAPN), 434-443 (KSKQWEGAFE), 449-458 (VNWRISGYRN), 473-490 (YYNEGKARIKGVEATANF), 494-509 (PLTHTVSYDYVDARNA), 517-529 (RRAKQQVKYQLDW), and 535-550 (DWGITYQYLGTRYDKD). Thr309 serves as a coordination point for cyanocob(III)alamin. Cyanocob(III)alamin is bound at residue Arg517. Residue Tyr551 coordinates cyanocob(III)alamin. The next 3 membrane-spanning stretches (beta stranded) occupy residues 558 to 572 (TVKMGGVSLWDLAVA), 585 to 596 (IANLFDKDYETV), and 602 to 614 (AGREYTLSGSYTF). Positions 597 to 614 (YGYQTAGREYTLSGSYTF) match the TonB C-terminal box motif.

It belongs to the TonB-dependent receptor family. BtuB (TC 1.B.14.3.1) subfamily.

It localises to the cell outer membrane. Involved in the active translocation of vitamin B12 (cyanocobalamin) across the outer membrane to the periplasmic space. It derives its energy for transport by interacting with the trans-periplasmic membrane protein TonB. The protein is Vitamin B12 transporter BtuB of Escherichia coli O9:H4 (strain HS).